Here is a 235-residue protein sequence, read N- to C-terminus: Purine nucleoside phosphorylase DeoD-type (235 aa).

Position 4 (histidine 4) interacts with a purine D-ribonucleoside. Residues glycine 20, arginine 24, arginine 43, and 87 to 90 (RVGT) each bind phosphate. Residues 179–181 (EME) and 203–204 (SD) each bind a purine D-ribonucleoside. Catalysis depends on aspartate 204, which acts as the Proton donor.

Belongs to the PNP/UDP phosphorylase family. Homohexamer; trimer of homodimers.

It catalyses the reaction a purine D-ribonucleoside + phosphate = a purine nucleobase + alpha-D-ribose 1-phosphate. It carries out the reaction a purine 2'-deoxy-D-ribonucleoside + phosphate = a purine nucleobase + 2-deoxy-alpha-D-ribose 1-phosphate. Its function is as follows. Catalyzes the reversible phosphorolytic breakdown of the N-glycosidic bond in the beta-(deoxy)ribonucleoside molecules, with the formation of the corresponding free purine bases and pentose-1-phosphate. This Exiguobacterium sibiricum (strain DSM 17290 / CCUG 55495 / CIP 109462 / JCM 13490 / 255-15) protein is Purine nucleoside phosphorylase DeoD-type.